Here is a 567-residue protein sequence, read N- to C-terminus: Dynein, 70 kDa intermediate chain, flagellar outer arm (567 aa).

4 WD repeats span residues 214-254 (VPTS…GPVE), 261-302 (SHRD…ECVE), 360-399 (GHHG…KTPI), and 404-444 (YHPT…NEPT).

It belongs to the dynein intermediate chain family. In terms of assembly, consists of at least 3 heavy chains (alpha, beta and gamma), 2 intermediate chains and 8 light chains.

It is found in the cytoplasm. The protein resides in the cytoskeleton. It localises to the flagellum axoneme. In terms of biological role, may play a role in regulating dynein heavy chain (DHC) activity. May function in holding IC78 to the DHC, or in stabilizing the entire dynein complex. This chain is Dynein, 70 kDa intermediate chain, flagellar outer arm (ODA6), found in Chlamydomonas reinhardtii (Chlamydomonas smithii).